A 274-amino-acid polypeptide reads, in one-letter code: MRKIAIYGKGGIGKSTTTQNTVAGLSEMGKKIMVVGCDPKADSTRLLLGGLAQRTVLDTLREEGEDVELDDVRKVGYAGTLCTESGGPEPGVGCAGRGIITSINLLEQLGAYADSEELDYAFYDVLGDVVCGGFAMPIREGKAQEIYIVVSGEMMAMYAANNISKGIVKFAEAGGVRLGGLICNSRNVDNEREMIEAFAAKLGTQMIHFVPRDNMVQRAEINRKTVIEFDPAHSQADEYRTLARKIDANEMRVIPSPLEIEELEKLLIDYGIAA.

An ATP-binding site is contributed by glycine 8–serine 15. Residue cysteine 94 participates in [4Fe-4S] cluster binding. Arginine 97 is modified (ADP-ribosylarginine; by dinitrogenase reductase ADP-ribosyltransferase). Cysteine 131 contributes to the [4Fe-4S] cluster binding site.

This sequence belongs to the NifH/BchL/ChlL family. In terms of assembly, homodimer. [4Fe-4S] cluster serves as cofactor. In terms of processing, the reversible ADP-ribosylation of Arg-97 inactivates the nitrogenase reductase and regulates nitrogenase activity.

The catalysed reaction is N2 + 8 reduced [2Fe-2S]-[ferredoxin] + 16 ATP + 16 H2O = H2 + 8 oxidized [2Fe-2S]-[ferredoxin] + 2 NH4(+) + 16 ADP + 16 phosphate + 6 H(+). Functionally, the key enzymatic reactions in nitrogen fixation are catalyzed by the nitrogenase complex, which has 2 components: the iron protein and the molybdenum-iron protein. The polypeptide is Nitrogenase iron protein (Desulfatibacillum aliphaticivorans).